The following is a 110-amino-acid chain: Cytochrome c6 (110 aa).

An N-terminal signal peptide occupies residues 1-25 (MKKLVSSVILALILFGFSWVSPAFA). Residues cysteine 39, cysteine 42, histidine 43, and methionine 83 each coordinate heme c.

The protein belongs to the cytochrome c family. PetJ subfamily. Monomer. Binds 1 heme c group covalently per subunit.

It localises to the cellular thylakoid lumen. Functions as an electron carrier between membrane-bound cytochrome b6-f and photosystem I in oxygenic photosynthesis. The chain is Cytochrome c6 from Gloeothece citriformis (strain PCC 7424) (Cyanothece sp. (strain PCC 7424)).